Here is a 338-residue protein sequence, read N- to C-terminus: Secretory carrier-associated membrane protein 1 (338 aa).

The interval 1-64 (MSDFDSNPFA…NVPNTQPAIM (64 aa)) is disordered. S2 is modified (N-acetylserine). S2 carries the post-translational modification Phosphoserine. The Cytoplasmic portion of the chain corresponds to 2–155 (SDFDSNPFAD…QKTVKLMYYL (154 aa)). T45 carries the post-translational modification Phosphothreonine. Residues 156–176 (WMFHAVTLFLNIFGCLAWFCV) form a helical membrane-spanning segment. Residues 177–181 (DSARA) lie on the Lumenal side of the membrane. A helical transmembrane segment spans residues 182-202 (VDFGLSILWFLLFTPCSFVCW). Topologically, residues 203–218 (YRPLYGAFRSDSSFRF) are cytoplasmic. The helical transmembrane segment at 219–239 (FVFFFVYICQFAVHVLQAAGF) threads the bilayer. The Lumenal portion of the chain corresponds to 240–261 (HNWGNCGWISSLTGLNQNIPVG). The helical transmembrane segment at 262 to 282 (IMMIIIAALFTASAVISLVMF) threads the bilayer. Residues 283–338 (KKVHGLYRTTGASFEKAQQEFATGVMSNKTVQTAAANAASTAASSAAQNAFKGNQI) lie on the Cytoplasmic side of the membrane.

It belongs to the SCAMP family. As to quaternary structure, interacts with SYNRG and ITSN1. Interacts with SLC9A7. As to expression, widely expressed, with highest expression in brain.

Its subcellular location is the golgi apparatus. The protein resides in the trans-Golgi network membrane. It is found in the recycling endosome membrane. Functionally, functions in post-Golgi recycling pathways. Acts as a recycling carrier to the cell surface. This chain is Secretory carrier-associated membrane protein 1 (SCAMP1), found in Homo sapiens (Human).